The primary structure comprises 274 residues: 5-deoxy-glucuronate isomerase (274 aa).

Belongs to the isomerase IolB family.

It catalyses the reaction 5-deoxy-D-glucuronate = 5-dehydro-2-deoxy-D-gluconate. Its pathway is polyol metabolism; myo-inositol degradation into acetyl-CoA; acetyl-CoA from myo-inositol: step 4/7. Involved in the isomerization of 5-deoxy-glucuronate (5DG) to 5-dehydro-2-deoxy-D-gluconate (DKG or 2-deoxy-5-keto-D-gluconate). The polypeptide is 5-deoxy-glucuronate isomerase (Geobacillus thermodenitrificans (strain NG80-2)).